The primary structure comprises 599 residues: Beta-(1--&gt;2)glucan export ATP-binding/permease protein NdvA (599 aa).

One can recognise an ABC transmembrane type-1 domain in the interval 21–301 (TITMCVASVL…ISAFINQTVT (281 aa)). 5 helical membrane passes run 22-42 (ITMC…PVLF), 55-75 (IFSP…AAVF), 156-176 (MRMS…GQLV), 248-268 (MAST…VTKG), and 276-296 (IAFI…SAFI). One can recognise an ABC transporter domain in the interval 335–569 (IVFDNVTYEF…GGRFSDLLRA (235 aa)). Residue 368-375 (GPTGAGKT) coordinates ATP.

It belongs to the ABC transporter superfamily. Beta-(1--&gt;2)glucan exporter (TC 3.A.1.108.1) family. As to quaternary structure, homodimer.

It localises to the cell inner membrane. It catalyses the reaction [(1-&gt;2)-beta-D-glucosyl](n)(in) + ATP + H2O = [(1-&gt;2)-beta-D-glucosyl](n)(out) + ADP + phosphate + H(+). Involved in beta-(1--&gt;2)glucan export. Its export to the periplasmic space is required to exert its action as a virulence factor. Transmembrane domains (TMD) form a pore in the inner membrane and the ATP-binding domain (NBD) is responsible for energy generation. The protein is Beta-(1--&gt;2)glucan export ATP-binding/permease protein NdvA of Brucella abortus (strain 2308).